The primary structure comprises 1138 residues: Eukaryotic translation initiation factor 3 subunit A (1138 aa).

The region spanning 319-502 is the PCI domain; it reads LQRMAAHVLL…NSIYFGTDLT (184 aa). Disordered stretches follow at residues 590–633 and 817–1138; these read NNAR…NEIQ and ERFR…VKRR. Basic and acidic residues-rich tracts occupy residues 817–903, 923–967, 1003–1049, and 1058–1078; these read ERFR…RVER, DRNE…KEND, GRDD…DQPQ, and DSPR…RDVR. Over residues 1082-1100 the composition is skewed to gly residues; sequence PKEGGGGVSGGGAGGGGGN. A compositionally biased stretch (basic and acidic residues) spans 1107–1128; it reads PREEKAPPKREQAQDKENKAGD.

This sequence belongs to the eIF-3 subunit A family. In terms of assembly, component of the eukaryotic translation initiation factor 3 (eIF-3) complex. The eIF-3 complex interacts with pix.

It is found in the cytoplasm. RNA-binding component of the eukaryotic translation initiation factor 3 (eIF-3) complex, which is involved in protein synthesis of a specialized repertoire of mRNAs and, together with other initiation factors, stimulates binding of mRNA and methionyl-tRNAi to the 40S ribosome. The eIF-3 complex specifically targets and initiates translation of a subset of mRNAs involved in cell proliferation. The protein is Eukaryotic translation initiation factor 3 subunit A of Drosophila virilis (Fruit fly).